The following is a 121-amino-acid chain: Prefoldin subunit beta (121 aa).

This sequence belongs to the prefoldin subunit beta family. As to quaternary structure, heterohexamer of two alpha and four beta subunits.

Its subcellular location is the cytoplasm. In terms of biological role, molecular chaperone capable of stabilizing a range of proteins. Seems to fulfill an ATP-independent, HSP70-like function in archaeal de novo protein folding. This is Prefoldin subunit beta from Methanoculleus marisnigri (strain ATCC 35101 / DSM 1498 / JR1).